A 492-amino-acid chain; its full sequence is GlcNAc-binding protein A (492 aa).

An N-terminal signal peptide occupies residues 1–23; sequence MNKSSTKTLIALSMMAVSSGVSA. One can recognise a Chitin-binding type-4 domain in the interval 24-204; that stretch reads HGYVSETNDG…AFYNVIDVKF (181 aa). The region spanning 443–484 is the Chitin-binding type-3 domain; it reads AGTKVLAEDSNVYQCKEFPYSGYCVQWTETATNFAPGVGSDW.

Belongs to the GbpA family.

The protein localises to the secreted. Functionally, probably interacts with GlcNAc residues. May promote attachment to both epithelial cell surfaces and chitin. The protein is GlcNAc-binding protein A of Aliivibrio fischeri (strain MJ11) (Vibrio fischeri).